Consider the following 411-residue polypeptide: Lycopene beta cyclase (411 aa).

4-32 (ALVIGSGPAGLAIAAELAQRGLKVQGLSP) is an NAD(+) binding site.

Belongs to the lycopene cyclase family. Requires FAD as cofactor.

The catalysed reaction is a carotenoid psi-end group = a carotenoid beta-end derivative. The enzyme catalyses all-trans-lycopene = gamma-carotene. It carries out the reaction gamma-carotene = all-trans-beta-carotene. It catalyses the reaction all-trans-neurosporene = beta-zeacarotene. It functions in the pathway carotenoid biosynthesis; beta-carotene biosynthesis. Its pathway is carotenoid biosynthesis; beta-zeacarotene biosynthesis. Inhibited by the bleaching herbicide 2-(4-methylphenoxy)triethylamine hydrochloride (MPTA). Its function is as follows. Catalyzes the double cyclization reaction which converts lycopene to beta-carotene. It also converts neurosporene to the monocyclic beta-zeacarotene but does not cyclize zeta-carotene. This chain is Lycopene beta cyclase, found in Synechococcus elongatus (strain ATCC 33912 / PCC 7942 / FACHB-805) (Anacystis nidulans R2).